The chain runs to 301 residues: Ornithine carbamoyltransferase (301 aa).

Carbamoyl phosphate-binding positions include Arg100 and 127–130 (HPCQ). L-ornithine is bound by residues Asn158, Asp221, and 225–226 (SM). The carbamoyl phosphate site is built by Cys260 and Arg288.

Belongs to the aspartate/ornithine carbamoyltransferase superfamily. OTCase family.

The protein localises to the cytoplasm. The enzyme catalyses carbamoyl phosphate + L-ornithine = L-citrulline + phosphate + H(+). Its pathway is amino-acid biosynthesis; L-arginine biosynthesis; L-arginine from L-ornithine and carbamoyl phosphate: step 1/3. Functionally, reversibly catalyzes the transfer of the carbamoyl group from carbamoyl phosphate (CP) to the N(epsilon) atom of ornithine (ORN) to produce L-citrulline. The polypeptide is Ornithine carbamoyltransferase (argF) (Vibrio sp. (strain 2693)).